Consider the following 263-residue polypeptide: Apolipoprotein A-I (263 aa).

The signal sequence occupies residues 1-18; that stretch reads MKAVVLAVAVLFLTGSQA. 2 consecutive repeat copies span residues 66–87 and 88–109. Residues 66 to 263 form a 10 X approximate tandem repeats region; that stretch reads LKLLDNWDTL…DEVSKKLSAQ (198 aa). Methionine 108 is modified (methionine sulfoxide). The stretch at 110 to 120 is one 3; half-length repeat; it reads KDLVEVKEKVQ. Tandem repeats lie at residues 121–142, 143–164, 165–186, 187–206, and 207–228. Residues 229–239 form a 9; half-length repeat; the sequence is PALEDLRLGLL. Repeat unit 10 spans residues 240–263; it reads PVLESLKASFLSSIDEVSKKLSAQ.

This sequence belongs to the apolipoprotein A1/A4/E family. As to quaternary structure, homodimer. Interacts with APOA1BP and CLU. Component of a sperm activating protein complex (SPAP), consisting of APOA1, an immunoglobulin heavy chain, an immunoglobulin light chain and albumin. Interacts with NDRG1. Interacts with SCGB3A2. Interacts with NAXE and YJEFN3. In terms of processing, glycosylated. Palmitoylated. Post-translationally, phosphorylation sites are present in the extracellular medium.

Its subcellular location is the secreted. In terms of biological role, participates in the reverse transport of cholesterol from tissues to the liver for excretion by promoting cholesterol efflux from tissues and by acting as a cofactor for the lecithin cholesterol acyltransferase (LCAT). As part of the SPAP complex, activates spermatozoa motility. The polypeptide is Apolipoprotein A-I (APOA1) (Octodon degus (Degu)).